The following is a 206-amino-acid chain: Dephospho-CoA kinase (206 aa).

The DPCK domain maps to 4–200 (IVALTGGIGS…AHYLQLASQF (197 aa)). Residue 12–17 (GSGKST) participates in ATP binding.

This sequence belongs to the CoaE family.

It is found in the cytoplasm. It catalyses the reaction 3'-dephospho-CoA + ATP = ADP + CoA + H(+). It functions in the pathway cofactor biosynthesis; coenzyme A biosynthesis; CoA from (R)-pantothenate: step 5/5. Functionally, catalyzes the phosphorylation of the 3'-hydroxyl group of dephosphocoenzyme A to form coenzyme A. The polypeptide is Dephospho-CoA kinase (Shigella flexneri).